The primary structure comprises 234 residues: Proteasome subunit alpha type-2 (234 aa).

A2 is modified (N-acetylalanine). Y121 is modified (phosphotyrosine).

The protein belongs to the peptidase T1A family. In terms of assembly, the 26S proteasome consists of a 20S proteasome core and two 19S regulatory subunits. The 20S proteasome core is a barrel-shaped complex made of 28 subunits that are arranged in four stacked rings. The two outer rings are each formed by seven alpha subunits, and the two inner rings are formed by seven beta subunits. The proteolytic activity is exerted by three beta-subunits PSMB5, PSMB6 and PSMB7.

Its subcellular location is the cytoplasm. It localises to the nucleus. Component of the 20S core proteasome complex involved in the proteolytic degradation of most intracellular proteins. This complex plays numerous essential roles within the cell by associating with different regulatory particles. Associated with two 19S regulatory particles, forms the 26S proteasome and thus participates in the ATP-dependent degradation of ubiquitinated proteins. The 26S proteasome plays a key role in the maintenance of protein homeostasis by removing misfolded or damaged proteins that could impair cellular functions, and by removing proteins whose functions are no longer required. Associated with the PA200 or PA28, the 20S proteasome mediates ubiquitin-independent protein degradation. This type of proteolysis is required in several pathways including spermatogenesis (20S-PA200 complex) or generation of a subset of MHC class I-presented antigenic peptides (20S-PA28 complex). The protein is Proteasome subunit alpha type-2 (psma2) of Xenopus laevis (African clawed frog).